Reading from the N-terminus, the 679-residue chain is Methionine--tRNA ligase (679 aa).

Positions 14 to 24 (PYANGSIHLGH) match the 'HIGH' region motif. Residues Cys-145, Cys-148, Cys-158, and Cys-161 each coordinate Zn(2+). The 'KMSKS' region motif lies at 331–335 (KMSKS). Lys-334 contacts ATP. In terms of domain architecture, tRNA-binding spans 577-679 (TFAAVDLRVA…SGAKPGQRIK (103 aa)).

This sequence belongs to the class-I aminoacyl-tRNA synthetase family. MetG type 1 subfamily. As to quaternary structure, homodimer. It depends on Zn(2+) as a cofactor.

It localises to the cytoplasm. It catalyses the reaction tRNA(Met) + L-methionine + ATP = L-methionyl-tRNA(Met) + AMP + diphosphate. In terms of biological role, is required not only for elongation of protein synthesis but also for the initiation of all mRNA translation through initiator tRNA(fMet) aminoacylation. This is Methionine--tRNA ligase from Pseudomonas putida (strain GB-1).